The sequence spans 253 residues: Alpha-acetolactate decarboxylase (253 aa).

This sequence belongs to the alpha-acetolactate decarboxylase family.

The enzyme catalyses (2S)-2-acetolactate + H(+) = (R)-acetoin + CO2. It functions in the pathway polyol metabolism; (R,R)-butane-2,3-diol biosynthesis; (R,R)-butane-2,3-diol from pyruvate: step 2/3. Converts acetolactate into acetoin. This chain is Alpha-acetolactate decarboxylase (alsD), found in Bacillus licheniformis (strain ATCC 14580 / DSM 13 / JCM 2505 / CCUG 7422 / NBRC 12200 / NCIMB 9375 / NCTC 10341 / NRRL NRS-1264 / Gibson 46).